The chain runs to 591 residues: Potassium channel KAT4 (591 aa).

Over 1-32 the chain is Cytoplasmic; sequence MAARSELLRPAFGEASPSLGRFVINPHSCSYR. The helical transmembrane segment at 33-53 threads the bilayer; it reads WWHMFLIMLVLYSAWASPFEL. Topologically, residues 54–63 are extracellular; it reads SMEKAASIAL. A helical transmembrane segment spans residues 64 to 84; the sequence is VVTDLVVDVFFAIDIALSFFV. The Cytoplasmic segment spans residues 85–109; sequence AYRDTSTGLLITDRRKITMRYLKRP. The helical transmembrane segment at 110-130 threads the bilayer; the sequence is CFALDVASTIPLQIIYQLVTG. The Extracellular portion of the chain corresponds to 131–137; sequence KRQGLWG. The chain crosses the membrane as a helical; Voltage-sensor span at residues 138-158; sequence LLNLLRLWRLRRVSKLFARVE. The Cytoplasmic segment spans residues 159-172; sequence KDIRFNYLWTRLIK. A helical transmembrane segment spans residues 173-193; it reads LLCVTLFALHFAACIYLWMAF. Residues 194 to 220 are Extracellular-facing; the sequence is NYKIKELTWIGSQIHSFEDRSVWFCYT. The pore-forming intramembrane region spans 221–240; sequence CAVYWSITTLATVGYGDLHA. At 241–246 the chain is on the extracellular side; it reads TNIGEM. The helical transmembrane segment at 247–267 threads the bilayer; that stretch reads LFSIAFMLFNMGLTSYIIGNI. The Cytoplasmic segment spans residues 268–591; it reads TNLVVRETSN…IRDGDHLLFS (324 aa). Residue 349–469 participates in a nucleoside 3',5'-cyclic phosphate binding; the sequence is LFQGVSDSLI…YIVFSNFIQY (121 aa). Positions 521–591 constitute a KHA domain; the sequence is RVVIHEQLPN…IRDGDHLLFS (71 aa).

It belongs to the potassium channel family. Plant (TC 1.A.1.4) subfamily.

Its subcellular location is the membrane. Functionally, probable inward-rectifying potassium channel. Assuming opened or closed conformations in response to the voltage difference across the membrane, the channel is activated by hyperpolarization. This chain is Potassium channel KAT4, found in Oryza sativa subsp. japonica (Rice).